The chain runs to 407 residues: Peptidase T (407 aa).

Residue His-82 coordinates Zn(2+). The active site involves Asp-84. Residue Asp-143 coordinates Zn(2+). Glu-177 functions as the Proton acceptor in the catalytic mechanism. Residues Glu-178, Asp-200, and His-382 each contribute to the Zn(2+) site.

The protein belongs to the peptidase M20B family. Requires Zn(2+) as cofactor.

The protein localises to the cytoplasm. It catalyses the reaction Release of the N-terminal residue from a tripeptide.. Its function is as follows. Cleaves the N-terminal amino acid of tripeptides. This chain is Peptidase T, found in Streptococcus uberis (strain ATCC BAA-854 / 0140J).